The sequence spans 642 residues: Voltage-gated potassium channel KCNC2 (642 aa).

Over 1–233 the chain is Cytoplasmic; the sequence is MGKIESNERV…EDPYSSRAAR (233 aa). Residues 45 to 98 are disordered; sequence DCLTAAGDKLQPLPPPLSPPPRPPPLSPVPSGCFEGGAGNCSSHGGNGGNGGSD. Positions 56–72 are enriched in pro residues; sequence PLPPPLSPPPRPPPLSP. The span at 78–98 shows a compositional bias: gly residues; the sequence is FEGGAGNCSSHGGNGGNGGSD. Zn(2+) is bound by residues H128, C134, C155, and C156. Residues 234–254 form a helical membrane-spanning segment; it reads FIAFASLFFILVSITTFCLET. 2 N-linked (GlcNAc...) asparagine glycosylation sites follow: N263 and N270. Residues 287-307 form a helical membrane-spanning segment; that stretch reads TYVEGVCVVWFTFEFLVRIVF. The Cytoplasmic portion of the chain corresponds to 308-317; the sequence is SPNKLEFIKN. The helical transmembrane segment at 318–338 threads the bilayer; that stretch reads LLNIIDFVAILPFYLEVGLSG. Residues 350–372 form a helical; Voltage-sensor membrane-spanning segment; the sequence is FLRVVRFVRILRIFKLTRHFVGL. Residues 373–385 are Cytoplasmic-facing; sequence RVLGHTLRASTNE. The chain crosses the membrane as a helical span at residues 386–406; it reads FLLLIIFLALGVLIFATMIYY. The K(+) site is built by T441, L442, G443, and Y444. The short motif at 441–446 is the Selectivity filter element; the sequence is TLGYGD. A helical membrane pass occupies residues 457–477; it reads VGALCALAGVLTIAMPVPVIV. The Cytoplasmic portion of the chain corresponds to 478–642; that stretch reads NNFGMYYSLA…RSRSPIPSIL (165 aa). Positions 542 to 576 are disordered; that stretch reads SVLSGDDSTGSEPPLSPPERLPIRRSSTRDKNRRG. S604 is modified (phosphoserine).

It belongs to the potassium channel family. C (Shaw) (TC 1.A.1.2) subfamily. Kv3.2/KCNC2 sub-subfamily. In terms of assembly, homotetramer and heterotetramer with other channel-forming alpha subunits, such as KCNC1. Interacts with KCNC1. Homotetramer or heterotetramer channel activity is regulated by association with modulating ancillary subunits such as KCNE1, KCNE2 and KCNE3, creating a functionally diverse range of channel complexes. Interacts with KCNE1, KCNE2 and KCNE3. Post-translationally, phosphorylated by PKA in cortical synaptosomes. cAMP-dependent phosphorylation inhibits channel activity. Histamine H2 receptor- and PKA-induced phosphorylation extends action potential spike duration, reduces action potential spike amplitude, sustains maximum firing frequency in hippocampal interneurons; also reduces the incidence of high-frequency oscillations in hippocampal CA3 pyramidal cell layers. Weakly expressed in the brain at postnatal age day 7 (P7) and increased at P60. Not detectable in newborn hippocampus. Expressed weakly at P7 in the early developing hippocampus, increasing progressively and reaching a plateau of expression at P14 that is maintained throughout P51. Expressed in paravalbumin- and somatostain-containing inhibitory interneurons of the hippocampus; in the CA1/CA3 stratum oriens-alveus and stratum pyramidale and in cells within the hilus and subgranular layer of the dentate gyrus (DG). Strongly expressed in parvalbumin (PV)-containing fast-spiking GABAergic inhibitor interneurons in deep cortical layers V and VI. Also expressed in non-fast-spiking calbindin (CB)- and/or somatostatin (SOM)-containing interneurons in deep cortical layers V and VI. Expressed in starburst amacrine cells of the retina in the inner nuclear layer (INL) and ganglion cell layer (GCL). Expressed in the suprachiasmatic nucleus (SCN) (at protein level). Expressed in the early developing brain, increasing progressively until P14.

Its subcellular location is the cell membrane. It localises to the membrane. The protein localises to the perikaryon. It is found in the cell projection. The protein resides in the axon. Its subcellular location is the dendrite. It localises to the postsynaptic cell membrane. The protein localises to the presynaptic cell membrane. It is found in the synapse. The protein resides in the synaptosome. Its subcellular location is the apical cell membrane. It localises to the basolateral cell membrane. It carries out the reaction K(+)(in) = K(+)(out). Inhibited by millimolar levels of tetraethylammonium (TEA). Contrary to other channels, inhibited only by millimolar levels of 4-aminopyridine (4-AP). Inhibited by Stichodactyla helianthus peptide ShK. Voltage-gated potassium channel that mediates transmembrane potassium transport in excitable membranes, primarily in the brain. Contributes to the regulation of the fast action potential repolarization and in sustained high-frequency firing in neurons of the central nervous system. Homotetramer channels mediate delayed-rectifier voltage-dependent potassium currents that activate rapidly at high-threshold voltages and inactivate slowly. Forms tetrameric channels through which potassium ions pass in accordance with their electrochemical gradient. The channel alternates between opened and closed conformations in response to the voltage difference across the membrane. Can form functional homotetrameric and heterotetrameric channels that contain variable proportions of KCNC1, and possibly other family members as well; channel properties depend on the type of alpha subunits that are part of the channel. Channel properties may be modulated by either the association with ancillary subunits, such as KCNE1, KCNE2 and KCNE3 or indirectly by nitric oxide (NO) through a cGMP- and PKG-mediated signaling cascade, slowing channel activation and deactivation of delayed rectifier potassium channels. Contributes to fire sustained trains of very brief action potentials at high frequency in thalamocortical and suprachiasmatic nucleus (SCN) neurons, in hippocampal and neocortical interneurons and in retinal ganglion cells. Sustained maximal action potential firing frequency in inhibitory hippocampal interneurons is negatively modulated by histamine H2 receptor activation in a cAMP- and protein kinase (PKA) phosphorylation-dependent manner. Plays a role in maintaining the fidelity of synaptic transmission in neocortical GABAergic interneurons by generating action potential (AP) repolarization at nerve terminals, thus reducing spike-evoked calcium influx and GABA neurotransmitter release. Required for long-range synchronization of gamma oscillations over distance in the neocortex. Contributes to the modulation of the circadian rhythm of spontaneous action potential firing in suprachiasmatic nucleus (SCN) neurons in a light-dependent manner. This is Voltage-gated potassium channel KCNC2 from Mus musculus (Mouse).